A 285-amino-acid chain; its full sequence is Methyltransferase grgD (285 aa).

The protein belongs to the methyltransferase superfamily. LaeA methyltransferase family.

It participates in secondary metabolite biosynthesis. In terms of biological role, methyltransferase; part of the gene cluster that mediates the biosynthesis of gregatin A, a fungal polyketide featuring an alkylated furanone core. The PKS grgA synthesizes C11 and C4 polyketide chains in the presence and absence of the trans-enoyl reductase grgB, respectively. The polyketide transferase grgF is then responsible for the fusion of the two carbon chains to produce the furanone skeleton of gregatin A. Next, the cytochrome P450 monooxygenase grgG accepts performs the oxidative cyclization to furnish the gregatin scaffold and leads to the formation of desmethylgregatin A. Finally, the O-methyltransferase grgD methylates the carboxyl group of desmethylgregatin A to provide gregatin A. This chain is Methyltransferase grgD, found in Penicillium sp.